The chain runs to 103 residues: Large ribosomal subunit protein bL21 (103 aa).

This sequence belongs to the bacterial ribosomal protein bL21 family. Part of the 50S ribosomal subunit. Contacts protein L20.

In terms of biological role, this protein binds to 23S rRNA in the presence of protein L20. This Pseudoalteromonas atlantica (strain T6c / ATCC BAA-1087) protein is Large ribosomal subunit protein bL21.